We begin with the raw amino-acid sequence, 205 residues long: Probable thymidylate kinase (205 aa).

10-17 contributes to the ATP binding site; that stretch reads GIDGSGKS.

It belongs to the thymidylate kinase family.

The enzyme catalyses dTMP + ATP = dTDP + ADP. This chain is Probable thymidylate kinase, found in Methanosarcina barkeri (strain Fusaro / DSM 804).